A 479-amino-acid chain; its full sequence is Calcium uniporter protein, mitochondrial (479 aa).

A mitochondrion-targeting transit peptide spans 1-54; sequence MNHALRRATLGLSPGLRASRLQQSFAKHQIPAVYRCEAASTPLQRAFTTSRCFR. The Mitochondrial matrix portion of the chain corresponds to 55–323; sequence QETAAESEKD…DTLAHQGAHR (269 aa). Disordered stretches follow at residues 56 to 125 and 206 to 238; these read ETAA…KGRL and EADQ…HEGP. Residues 59–79 are a coiled coil; sequence AESEKDDAARREEQSERARKR. A compositionally biased stretch (basic and acidic residues) spans 60–75; sequence ESEKDDAARREEQSER. The segment covering 83 to 93 has biased composition (polar residues); that stretch reads NVTSGSSAQTL. Basic and acidic residues-rich tracts occupy residues 94–122 and 206–224; these read ENDR…DMKK and EADQ…KKDN. Residues 324–344 traverse the membrane as a helical segment; sequence LAQGGFAALAGWWGVVYYVTF. Topologically, residues 345 to 354 are mitochondrial intermembrane; it reads HTQAGWDLVE. The short motif at 350-358 is the Selectivity filter element; the sequence is WDLVEPVTY. Glu354 lines the Ca(2+) pocket. A helical membrane pass occupies residues 355–375; the sequence is PVTYLAGLTTVMGAYLWFLYI. Over 376-479 the chain is Mitochondrial matrix; the sequence is SRDLSYKAAM…GSSDKIKKKQ (104 aa). Basic and acidic residues predominate over residues 445–462; sequence KVLEEEKQGRDGTKVTEG. The disordered stretch occupies residues 445–479; that stretch reads KVLEEEKQGRDGTKVTEGKDEDDGPGSSDKIKKKQ.

This sequence belongs to the MCU (TC 1.A.77) family. In terms of assembly, homotetramer, assembles in a dimer or dimers configuration with two interfaces.

Its subcellular location is the mitochondrion inner membrane. It catalyses the reaction Ca(2+)(in) = Ca(2+)(out). Functionally, highly selective calcium channel localized to the inner mitochondrial membrane, which mediates calcium uptake into the mitochondrial matrix. Mitochondrial calcium homeostasis plays key roles in cellular physiology and regulates ATP production, cytoplasmic calcium signals and activation of cell death pathways. Sufficient to operate as a pore-forming channel without the need of calcium-sensor or auxiliary subunit. This chain is Calcium uniporter protein, mitochondrial, found in Gibberella zeae (strain ATCC MYA-4620 / CBS 123657 / FGSC 9075 / NRRL 31084 / PH-1) (Wheat head blight fungus).